Reading from the N-terminus, the 174-residue chain is B3 domain-containing protein At2g31862 (174 aa).

A DNA-binding region (TF-B3) is located at residues 1–71 (MWVNLSCMCH…KLYIALVPLD (71 aa)).

It is found in the nucleus. This is B3 domain-containing protein At2g31862 from Arabidopsis thaliana (Mouse-ear cress).